Consider the following 418-residue polypeptide: Glutamyl-tRNA reductase (418 aa).

Substrate is bound by residues 49 to 52 (TCNR), Ser-109, 114 to 116 (EPQ), and Gln-120. Cys-50 (nucleophile) is an active-site residue. Position 189 to 194 (189 to 194 (GAGETI)) interacts with NADP(+).

Belongs to the glutamyl-tRNA reductase family. Homodimer.

The enzyme catalyses (S)-4-amino-5-oxopentanoate + tRNA(Glu) + NADP(+) = L-glutamyl-tRNA(Glu) + NADPH + H(+). Its pathway is porphyrin-containing compound metabolism; protoporphyrin-IX biosynthesis; 5-aminolevulinate from L-glutamyl-tRNA(Glu): step 1/2. Catalyzes the NADPH-dependent reduction of glutamyl-tRNA(Glu) to glutamate 1-semialdehyde (GSA). This Citrobacter koseri (strain ATCC BAA-895 / CDC 4225-83 / SGSC4696) protein is Glutamyl-tRNA reductase.